Consider the following 480-residue polypeptide: Glutamyl-tRNA(Gln) amidotransferase subunit A (480 aa).

Catalysis depends on charge relay system residues Lys74 and Ser149. Catalysis depends on Ser173, which acts as the Acyl-ester intermediate.

It belongs to the amidase family. GatA subfamily. In terms of assembly, heterotrimer of A, B and C subunits.

It carries out the reaction L-glutamyl-tRNA(Gln) + L-glutamine + ATP + H2O = L-glutaminyl-tRNA(Gln) + L-glutamate + ADP + phosphate + H(+). In terms of biological role, allows the formation of correctly charged Gln-tRNA(Gln) through the transamidation of misacylated Glu-tRNA(Gln) in organisms which lack glutaminyl-tRNA synthetase. The reaction takes place in the presence of glutamine and ATP through an activated gamma-phospho-Glu-tRNA(Gln). In Ruthia magnifica subsp. Calyptogena magnifica, this protein is Glutamyl-tRNA(Gln) amidotransferase subunit A.